The following is a 156-amino-acid chain: Small ribosomal subunit protein uS7c (156 aa).

This sequence belongs to the universal ribosomal protein uS7 family. In terms of assembly, part of the 30S ribosomal subunit.

The protein localises to the plastid. It is found in the chloroplast. Functionally, one of the primary rRNA binding proteins, it binds directly to 16S rRNA where it nucleates assembly of the head domain of the 30S subunit. This chain is Small ribosomal subunit protein uS7c (rps7), found in Phaeodactylum tricornutum (strain CCAP 1055/1).